Consider the following 388-residue polypeptide: Succinate--CoA ligase [ADP-forming] subunit beta (388 aa).

The ATP-grasp domain occupies 9–244; it reads KQLFAEYGLP…PSQDDPREAH (236 aa). Residues Lys-46, 53-55, Glu-99, Thr-102, and Glu-107 contribute to the ATP site; that span reads GRG. Asn-199 and Asp-213 together coordinate Mg(2+). Residues Asn-264 and 321–323 contribute to the substrate site; that span reads GIV.

Belongs to the succinate/malate CoA ligase beta subunit family. In terms of assembly, heterotetramer of two alpha and two beta subunits. Mg(2+) serves as cofactor.

It catalyses the reaction succinate + ATP + CoA = succinyl-CoA + ADP + phosphate. The catalysed reaction is GTP + succinate + CoA = succinyl-CoA + GDP + phosphate. The protein operates within carbohydrate metabolism; tricarboxylic acid cycle; succinate from succinyl-CoA (ligase route): step 1/1. Functionally, succinyl-CoA synthetase functions in the citric acid cycle (TCA), coupling the hydrolysis of succinyl-CoA to the synthesis of either ATP or GTP and thus represents the only step of substrate-level phosphorylation in the TCA. The beta subunit provides nucleotide specificity of the enzyme and binds the substrate succinate, while the binding sites for coenzyme A and phosphate are found in the alpha subunit. The sequence is that of Succinate--CoA ligase [ADP-forming] subunit beta from Pseudomonas syringae pv. syringae (strain B728a).